A 190-amino-acid polypeptide reads, in one-letter code: Superoxide dismutase [Fe] (190 aa).

Residues histidine 27, histidine 75, aspartate 156, and histidine 160 each coordinate Fe cation.

This sequence belongs to the iron/manganese superoxide dismutase family. As to quaternary structure, homodimer. The cofactor is Fe cation.

The enzyme catalyses 2 superoxide + 2 H(+) = H2O2 + O2. Its function is as follows. Destroys superoxide anion radicals which are normally produced within the cells and which are toxic to biological systems. In Entamoeba histolytica (strain ATCC 30459 / HM-1:IMSS / ABRM), this protein is Superoxide dismutase [Fe] (SODB).